Consider the following 337-residue polypeptide: Ferredoxin--NADP reductase (337 aa).

Positions 35, 43, 48, 88, 122, 289, and 330 each coordinate FAD.

Belongs to the ferredoxin--NADP reductase type 2 family. Homodimer. FAD serves as cofactor.

It catalyses the reaction 2 reduced [2Fe-2S]-[ferredoxin] + NADP(+) + H(+) = 2 oxidized [2Fe-2S]-[ferredoxin] + NADPH. In Ehrlichia ruminantium (strain Gardel), this protein is Ferredoxin--NADP reductase.